Consider the following 640-residue polypeptide: Serine/threonine-protein kinase WNG1 (640 aa).

The N-terminal stretch at 1–70 (MPEQDLASGF…GVLCTVEAGA (70 aa)) is a signal peptide. Disordered regions lie at residues 100–222 (PEVT…AQPT) and 237–280 (SHPD…DASN). Positions 104-120 (HASSEGSPQFESSLSQQ) are enriched in polar residues. Basic and acidic residues predominate over residues 124–141 (RPADRGEAHNGEEPRKDA). The span at 175 to 186 (QRQASSAAESLA) shows a compositional bias: low complexity. A compositionally biased stretch (basic and acidic residues) spans 248–279 (FSKKQEGRRERRLAVRGDDSFARGHNRDRDAS). Residues 291–593 (WAKIAALATG…LKQVMEDPYF (303 aa)) form the Protein kinase domain. Position 395 (lysine 395) interacts with ATP. Catalysis depends on aspartate 486, which acts as the Proton acceptor. Residues 609-640 (PFRGDFSIDDPDAGGKMYIPPSKEQDHEQENE) form a disordered region. Positions 631–640 (KEQDHEQENE) are enriched in basic and acidic residues.

The protein belongs to the protein kinase superfamily. STE Ser/Thr protein kinase family. WNG subfamily. Mg(2+) serves as cofactor.

Its subcellular location is the cytoplasmic granule. The protein resides in the secreted. The protein localises to the parasitophorous vacuole lumen. The catalysed reaction is L-seryl-[protein] + ATP = O-phospho-L-seryl-[protein] + ADP + H(+). It catalyses the reaction L-threonyl-[protein] + ATP = O-phospho-L-threonyl-[protein] + ADP + H(+). Serine/threonine-protein kinase which, at the tachyzoite stage, phosphorylates several parasitophorous vacuole (PV)-resident proteins such as GRA2, GRA6 and GRA7. By phosphorylating GRA2 and GRA6, regulates the formation of a functional intravacuolar network (IVN); IVN is composed of membranous tubules that bud from the PV membrane into the vacuolar lumen. Plays a role in the establishement of chronic infection in the host by controlling cyst formation in the host tissues. The polypeptide is Serine/threonine-protein kinase WNG1 (Toxoplasma gondii).